An 819-amino-acid polypeptide reads, in one-letter code: Hypoxia-inducible factor 1-alpha (819 aa).

The disordered stretch occupies residues 1–31 (MEGAAGGEEKKNRMSSERRKEKSRDAARSRR). Positions 1-402 (MEGAAGGEEK…KEPDALTLLA (402 aa)) are interaction with TSGA10. Residues 7–31 (GEEKKNRMSSERRKEKSRDAARSRR) are compositionally biased toward basic and acidic residues. A bHLH domain is found at 18–71 (RRKEKSRDAARSRRSKESEVFYELAHQLPLPHNVSSHLDKASVMRLTISYLRVR). The tract at residues 22 to 31 (KSRDAARSRR) is DNA-binding. A PAS 1 domain is found at 86–159 (KAQMNCFYLK…THRNGPIKKG (74 aa)). The required for heterodimer formation with ARNT stretch occupies residues 171 to 192 (RMKCTLTSRGRTMNIKSATWKV). One can recognise a PAS 2 domain in the interval 229 to 299 (PHPSNIEIPL…KTHHDMFTKG (71 aa)). Ser248 is subject to Phosphoserine; by CK1. The PAC domain maps to 303–346 (TGQYRMLAKRGGYVWVETQATVIYNTKNSQPQCIVCVNYVVSGI). The interval 402–599 (APAAGDTIIS…NPPSVSTAFQ (198 aa)) is ODD. Pro403 is modified (4-hydroxyproline). Polar residues predominate over residues 495–518 (IQDQPASPSDGSTRQSSPEPNSPS). The tract at residues 495–521 (IQDQPASPSDGSTRQSSPEPNSPSEYC) is disordered. Residues 532–576 (FKLELVEKLFAEDTEAKNPFSTQDTDLDLEMLAPYIPMDDDFQLR) are NTAD. Residue Lys533 is modified to N6-acetyllysine; alternate. Residue Lys533 forms a Glycyl lysine isopeptide (Lys-Gly) (interchain with G-Cter in ubiquitin); alternate linkage. Glycyl lysine isopeptide (Lys-Gly) (interchain with G-Cter in ubiquitin) cross-links involve residues Lys539 and Lys548. Ser552 is subject to Phosphoserine; by GSK3-beta. Thr556 carries the post-translational modification Phosphothreonine; by GSK3-beta. A 4-hydroxyproline modification is found at Pro565. Ser577 is subject to Phosphoserine; by PLK3. Residues 577–778 (SFDQLSPLES…SDLACRLLGQ (202 aa)) form an ID region. The tract at residues 581-685 (LSPLESSSPN…SHPRSPNVLS (105 aa)) is disordered. Low complexity predominate over residues 582-613 (SPLESSSPNPPSVSTAFQQTQLQEPTITTTTT). The span at 614–628 (EELKTVTKDSTEDIK) shows a compositional bias: basic and acidic residues. Over residues 632 to 655 (TSPSSTHTPKETTTATTSSPYSGT) the composition is skewed to low complexity. Ser650 is subject to Phosphoserine; by PLK3. Lys702 is modified (N6-acetyllysine). The short motif at 711–717 (RKRKMEH) is the Nuclear localization signal element. The segment at 779 to 819 (SMDGSGLPQLTSYDCEVNAPIQGSRNLLQGEELLRALDQVN) is CTAD. The residue at position 793 (Cys793) is an S-nitrosocysteine. Asn796 is subject to (3S)-3-hydroxyasparagine.

As to quaternary structure, interacts with the ARNT; forms a heterodimer that binds core DNA sequence 5'-TACGTG-3' within the hypoxia response element (HRE) of target gene promoters. Interacts with COPS5; the interaction increases the transcriptional activity of HIF1A through increased stability. Interacts with EP300 (via TAZ-type 1 domains); the interaction is stimulated in response to hypoxia and inhibited by CITED2. Interacts with CREBBP (via TAZ-type 1 domains). Interacts with NCOA1, NCOA2, APEX1 and HSP90. Interacts (hydroxylated within the ODD domain) with VHLL (via beta domain); the interaction, leads to polyubiquitination and subsequent HIF1A proteasomal degradation. During hypoxia, sumoylated HIF1A also binds VHL; the interaction promotes the ubiquitination of HIF1A. Interacts with SENP1; the interaction desumoylates HIF1A resulting in stabilization and activation of transcription. Interacts (via the ODD domain) with NAA10; the interaction appears not to acetylate HIF1A nor have any affect on protein stability, during hypoxia. Interacts with RWDD3; the interaction enhances HIF1A sumoylation. Interacts with TSGA10. Interacts with HIF3A. Interacts with RORA (via the DNA binding domain); the interaction enhances HIF1A transcription under hypoxia through increasing protein stability. Interaction with PSMA7 inhibits the transactivation activity of HIF1A under both normoxic and hypoxia-mimicking conditions. Interacts with USP20. Interacts with RACK1; promotes HIF1A ubiquitination and proteasome-mediated degradation. Interacts (via N-terminus) with USP19. Interacts with SIRT2. Interacts (deacetylated form) with EGLN1. Interacts with CBFA2T3. Interacts with HSP90AA1 and HSP90AB1. Interacts with DCUN1D1; this interaction increases the interaction between VHL and DCUN1D1. Interacts with HIF1AN. Post-translationally, S-nitrosylation of Cys-793 may be responsible for increased recruitment of p300 coactivator necessary for transcriptional activity of HIF-1 complex. Acetylation of Lys-533 by ARD1 increases interaction with VHL and stimulates subsequent proteasomal degradation. Deacetylation of Lys-702 by SIRT2 increases its interaction with and hydroxylation by EGLN1 thereby inactivating HIF1A activity by inducing its proteasomal degradation. In terms of processing, requires phosphorylation for DNA-binding. Phosphorylation at Ser-248 by CSNK1D/CK1 represses kinase activity and impairs ARNT binding. Phosphorylation by GSK3-beta and PLK3 promote degradation by the proteasome. Post-translationally, the iron and 2-oxoglutarate dependent 3-hydroxylation of asparagine is (S) stereospecific within HIF CTAD domains. Sumoylated; with SUMO1 under hypoxia. Sumoylation is enhanced through interaction with RWDD3. Both sumoylation and desumoylation seem to be involved in the regulation of its stability during hypoxia. Sumoylation can promote either its stabilization or its VHL-dependent degradation by promoting hydroxyproline-independent HIF1A-VHL complex binding, thus leading to HIF1A ubiquitination and proteasomal degradation. Desumoylation by SENP1 increases its stability amd transcriptional activity. There is a disaccord between various publications on the effect of sumoylation and desumoylation on its stability and transcriptional activity. In terms of processing, in normoxia, is hydroxylated on Pro-403 and Pro-565 in the oxygen-dependent degradation domain (ODD) by EGLN1/PHD2 and EGLN2/PHD1. EGLN3/PHD3 has also been shown to hydroxylate Pro-565. The hydroxylated prolines promote interaction with VHL, initiating rapid ubiquitination and subsequent proteasomal degradation. Deubiquitinated by USP20. Under hypoxia, proline hydroxylation is impaired and ubiquitination is attenuated, resulting in stabilization. In normoxia, is hydroxylated on Asn-796 by HIF1AN, thus abrogating interaction with CREBBP and EP300 and preventing transcriptional activation. Repressed by iron ion, via Fe(2+) prolyl hydroxylase (PHD) enzymes-mediated hydroxylation and subsequent proteasomal degradation.

The protein resides in the cytoplasm. It localises to the nucleus. It is found in the nucleus speckle. With respect to regulation, induced by reactive oxygen species (ROS). Functionally, functions as a master transcriptional regulator of the adaptive response to hypoxia. Under hypoxic conditions, activates the transcription of over 40 genes, including erythropoietin, glucose transporters, glycolytic enzymes, vascular endothelial growth factor, HILPDA, and other genes whose protein products increase oxygen delivery or facilitate metabolic adaptation to hypoxia. Plays an essential role in embryonic vascularization, tumor angiogenesis and pathophysiology of ischemic disease. Heterodimerizes with ARNT; heterodimer binds to core DNA sequence 5'-TACGTG-3' within the hypoxia response element (HRE) of target gene promoters. Activation requires recruitment of transcriptional coactivators such as CREBBP and EP300. Activity is enhanced by interaction with NCOA1 and/or NCOA2. Interaction with redox regulatory protein APEX1 seems to activate CTAD and potentiates activation by NCOA1 and CREBBP. Involved in the axonal distribution and transport of mitochondria in neurons during hypoxia. The protein is Hypoxia-inducible factor 1-alpha (HIF1A) of Eospalax fontanierii baileyi (Plateau zokor).